We begin with the raw amino-acid sequence, 232 residues long: Ion-translocating oxidoreductase complex subunit E (232 aa).

6 helical membrane-spanning segments follow: residues 18 to 38, 39 to 59, 69 to 89, 93 to 113, 127 to 147, and 182 to 202; these read GLVQ…LTNA, LGLG…VSLV, IPVF…LINA, GLYL…IIIG, AAFD…VLGA, and PFLL…LIAL.

Belongs to the NqrDE/RnfAE family. In terms of assembly, the complex is composed of six subunits: RnfA, RnfB, RnfC, RnfD, RnfE and RnfG.

The protein localises to the cell inner membrane. Functionally, part of a membrane-bound complex that couples electron transfer with translocation of ions across the membrane. This is Ion-translocating oxidoreductase complex subunit E from Shewanella sp. (strain ANA-3).